We begin with the raw amino-acid sequence, 691 residues long: ERI1 exoribonuclease 2 (691 aa).

The Exonuclease domain occupies 37-226 (LIVIDFESTC…DDSRNTALLA (190 aa)). Residues D41, E43, and D156 each contribute to the Mg(2+) site. Residue E43 is the Proton acceptor of the active site. E43 provides a ligand contact to AMP. H213 acts as the Proton acceptor in catalysis. H213 contributes to the AMP binding site. Position 218 (D218) interacts with Mg(2+). Residues C597, C599, C622, and C634 each contribute to the Zn(2+) site. The GRF-type zinc finger occupies 597–643 (CKCGRRSKRLVVSNNGPNHGKVFYCCPIGKYQENRKCCGYFKWEQTL).

The protein belongs to the ERI2 family. Mg(2+) serves as cofactor.

In Homo sapiens (Human), this protein is ERI1 exoribonuclease 2 (ERI2).